The primary structure comprises 506 residues: Hippocampus abundant transcript-like protein 1 (506 aa).

The disordered stretch occupies residues Met1 to Lys25. The Extracellular portion of the chain corresponds to Met1 to Ala49. The helical transmembrane segment at Ile50 to Leu70 threads the bilayer. Residues His71 to Asn82 lie on the Cytoplasmic side of the membrane. A helical transmembrane segment spans residues Gly83–Leu103. The Extracellular segment spans residues Ser104–Pro111. A helical transmembrane segment spans residues Phe112–Trp132. The Cytoplasmic portion of the chain corresponds to Trp133–Tyr134. Residues Phe135–Val155 traverse the membrane as a helical segment. The Extracellular portion of the chain corresponds to Ala156–Tyr168. Residues Gly169 to Leu189 form a helical membrane-spanning segment. Over Ser190–Ser196 the chain is Cytoplasmic. The helical transmembrane segment at Leu197 to Val217 threads the bilayer. At Pro218–Leu255 the chain is on the extracellular side. A helical transmembrane segment spans residues Leu256–Phe276. The Cytoplasmic portion of the chain corresponds to Leu277 to Gln281. The chain crosses the membrane as a helical span at residues Val282–Ile302. The Extracellular portion of the chain corresponds to Val303–Lys319. Residues Asn320–Ser340 traverse the membrane as a helical segment. A topological domain (cytoplasmic) is located at residue Gln341. The helical transmembrane segment at Ala342–Ile362 threads the bilayer. At Ser363 to Gly387 the chain is on the extracellular side. Residues Leu388–Leu408 traverse the membrane as a helical segment. The Cytoplasmic segment spans residues Thr409–Pro428. The chain crosses the membrane as a helical span at residues Gly429–Ile449. The Extracellular portion of the chain corresponds to Pro450 to Leu506. The tract at residues Gly457–Ile481 is disordered. Positions Gln459 to Glu474 are enriched in polar residues. Residue Asn463 is glycosylated (N-linked (GlcNAc...) asparagine).

The protein belongs to the major facilitator superfamily.

It localises to the membrane. This chain is Hippocampus abundant transcript-like protein 1, found in Homo sapiens (Human).